Here is a 240-residue protein sequence, read N- to C-terminus: Small ribosomal subunit protein eS4 (240 aa).

Residues 37–99 form the S4 RNA-binding domain; sequence VPLVVLLRDV…RGEFFRVFPD (63 aa).

Belongs to the eukaryotic ribosomal protein eS4 family.

The protein is Small ribosomal subunit protein eS4 of Halorubrum lacusprofundi (strain ATCC 49239 / DSM 5036 / JCM 8891 / ACAM 34).